The primary structure comprises 126 residues: Holo-[acyl-carrier-protein] synthase (126 aa).

2 residues coordinate Mg(2+): aspartate 9 and glutamate 58.

Belongs to the P-Pant transferase superfamily. AcpS family. It depends on Mg(2+) as a cofactor.

It is found in the cytoplasm. It carries out the reaction apo-[ACP] + CoA = holo-[ACP] + adenosine 3',5'-bisphosphate + H(+). In terms of biological role, transfers the 4'-phosphopantetheine moiety from coenzyme A to a Ser of acyl-carrier-protein. This chain is Holo-[acyl-carrier-protein] synthase, found in Pectobacterium carotovorum subsp. carotovorum (strain PC1).